Here is a 460-residue protein sequence, read N- to C-terminus: MARTVVALNILVLLGLCWSLAVANPLPAAHETVAKGENGTKPDSDVIEHCSDAWSFDATTMDHNGTMLFFKGEFVWRGHSGIRELISERWKNPVTSVDAAFRGPDSVFLIKEDKVWVYPPEKKENGYPKLFQEEFPGIPYPPDAAVECHRGECQSEGVLFFQGNRKWFWDFATRTQKERSWPAVGNCTAALRWLERYYCFQGNKFLRFNPVTGEVPPRYPLDARDYFISCPGRGHGKLRNGTAHGNSTHPMHSRCNADPGLSALLSDHRGATYAFSGSHYWRLDSSRDGWHSWPIAHHWPQGPSAVDAAFSWDEKVYLIQGTQVYVFLTKGGNNLVSGYPKRLEKELGSPPGISLDTIDAAFSCPGSSKLYVTSGRRLWWLDLKSGAQATWAELSWPHEKVDGALCLEKSLGPYSCSSNGPNLFFIHGPNLYCYSSIDKLNAAKSLPQPQKVNSILGCSQ.

The N-terminal stretch at 1-23 (MARTVVALNILVLLGLCWSLAVA) is a signal peptide. Asn-38 and Asn-64 each carry an N-linked (GlcNAc...) asparagine glycan. 3 disulfides stabilise this stretch: Cys-50–Cys-230, Cys-148–Cys-153, and Cys-187–Cys-199. Hemopexin repeat units lie at residues 53–93 (AWSF…WKNP), 94–138 (VTSV…FPGI), 139–183 (PYPP…SWPA), and 184–230 (VGNC…FISC). His-79 contacts heme. Residue His-149 participates in heme binding. The N-linked (GlcNAc...) asparagine glycan is linked to Asn-186. His-235 contacts heme. N-linked (GlcNAc...) asparagine glycans are attached at residues Asn-240 and Asn-246. Intrachain disulfides connect Cys-255–Cys-458, Cys-364–Cys-406, and Cys-416–Cys-433. 4 Hemopexin repeats span residues 257–302 (ADPG…WPQG), 303–350 (PSAV…LGSP), 355–394 (LDTI…WAEL), and 398–448 (HEKV…SLPQ). His-291 contributes to the heme binding site.

Belongs to the hemopexin family. As to expression, expressed by the liver and secreted in plasma.

The protein resides in the secreted. Binds heme and transports it to the liver for breakdown and iron recovery, after which the free hemopexin returns to the circulation. This chain is Hemopexin (Hpx), found in Rattus norvegicus (Rat).